The sequence spans 360 residues: Peptide chain release factor 1 (360 aa).

Position 236 is an N5-methylglutamine (glutamine 236).

Belongs to the prokaryotic/mitochondrial release factor family. In terms of processing, methylated by PrmC. Methylation increases the termination efficiency of RF1.

The protein resides in the cytoplasm. Its function is as follows. Peptide chain release factor 1 directs the termination of translation in response to the peptide chain termination codons UAG and UAA. This Limosilactobacillus fermentum (strain NBRC 3956 / LMG 18251) (Lactobacillus fermentum) protein is Peptide chain release factor 1.